Reading from the N-terminus, the 284-residue chain is 4-diphosphocytidyl-2-C-methyl-D-erythritol kinase (284 aa).

K14 is an active-site residue. 98-108 (PMGGGLGGGSS) provides a ligand contact to ATP. Residue D140 is part of the active site.

The protein belongs to the GHMP kinase family. IspE subfamily.

It catalyses the reaction 4-CDP-2-C-methyl-D-erythritol + ATP = 4-CDP-2-C-methyl-D-erythritol 2-phosphate + ADP + H(+). Its pathway is isoprenoid biosynthesis; isopentenyl diphosphate biosynthesis via DXP pathway; isopentenyl diphosphate from 1-deoxy-D-xylulose 5-phosphate: step 3/6. Catalyzes the phosphorylation of the position 2 hydroxy group of 4-diphosphocytidyl-2C-methyl-D-erythritol. The sequence is that of 4-diphosphocytidyl-2-C-methyl-D-erythritol kinase from Shewanella halifaxensis (strain HAW-EB4).